The following is a 455-amino-acid chain: 3-isopropylmalate dehydratase large subunit (455 aa).

[4Fe-4S] cluster is bound by residues C337, C397, and C400.

Belongs to the aconitase/IPM isomerase family. LeuC type 1 subfamily. In terms of assembly, heterodimer of LeuC and LeuD. [4Fe-4S] cluster is required as a cofactor.

It carries out the reaction (2R,3S)-3-isopropylmalate = (2S)-2-isopropylmalate. The protein operates within amino-acid biosynthesis; L-leucine biosynthesis; L-leucine from 3-methyl-2-oxobutanoate: step 2/4. Catalyzes the isomerization between 2-isopropylmalate and 3-isopropylmalate, via the formation of 2-isopropylmaleate. The polypeptide is 3-isopropylmalate dehydratase large subunit (Leuconostoc citreum (strain KM20)).